Reading from the N-terminus, the 476-residue chain is Deoxyguanosinetriphosphate triphosphohydrolase-like protein 2 (476 aa).

A disordered region spans residues 1-20 (MYTDADRSREVVPEKDGHDK). In terms of domain architecture, HD spans 60-233 (RLTHSLEVAQ…MDLADDIAYS (174 aa)).

This sequence belongs to the dGTPase family. Type 2 subfamily.

The protein is Deoxyguanosinetriphosphate triphosphohydrolase-like protein 2 of Mesorhizobium japonicum (strain LMG 29417 / CECT 9101 / MAFF 303099) (Mesorhizobium loti (strain MAFF 303099)).